The following is a 96-amino-acid chain: MKCFAQIVVLLLVIAFSHGAVITGVRDRDAQCGSGTCCAASAFSRNIRFCVPLGNNGEECHPASHKVPYNGKRLSSLCPCNTGLTCSKSGEKYQCS.

Residues 1–19 (MKCFAQIVVLLLVIAFSHG) form the signal peptide. Disulfide bonds link cysteine 32/cysteine 50, cysteine 37/cysteine 78, cysteine 60/cysteine 86, and cysteine 80/cysteine 95.

This sequence belongs to the AVIT (prokineticin) family. As to expression, expressed by the skin glands.

The protein resides in the secreted. Its function is as follows. Potent agonist for both PKR1/PROKR1 and PKR2/PROKR2, and inducer of a potent and long-lasting hyperalgesia. Also potentiates capsaicin-induced TRPV1 current, when tested on DRG neurons. At subnanomolar concentrations, this protein both induces potent chemotaxis of macrophages and stimulates LPS-induced production of the pro-inflammatory cytokines IL-1 and IL-12. In vivo, potently stimulates the contraction of the guinea-pig gastrointestinal (GI) smooth muscle (nanomolar concentration). The protein is Prokineticin Bm8-b of Bombina maxima (Giant fire-bellied toad).